A 167-amino-acid polypeptide reads, in one-letter code: Peptidyl-prolyl cis-trans isomerase-like 3 (167 aa).

The PPIase cyclophilin-type domain maps to 1–153; that stretch reads MSVTLHTNLG…QEIKLLNVTV (153 aa).

The protein belongs to the cyclophilin-type PPIase family. PPIL3 subfamily.

It carries out the reaction [protein]-peptidylproline (omega=180) = [protein]-peptidylproline (omega=0). Its function is as follows. PPIases accelerate the folding of proteins. It catalyzes the cis-trans isomerization of proline imidic peptide bonds in oligopeptides. The sequence is that of Peptidyl-prolyl cis-trans isomerase-like 3 (CYP10) from Cryptococcus neoformans var. neoformans serotype D (strain B-3501A) (Filobasidiella neoformans).